The chain runs to 72 residues: Translation initiation factor IF-1 (72 aa).

The region spanning 1 to 72 is the S1-like domain; the sequence is MAKEDNIEMQ…TKGRIVFRAR (72 aa).

This sequence belongs to the IF-1 family. Component of the 30S ribosomal translation pre-initiation complex which assembles on the 30S ribosome in the order IF-2 and IF-3, IF-1 and N-formylmethionyl-tRNA(fMet); mRNA recruitment can occur at any time during PIC assembly.

It localises to the cytoplasm. Its function is as follows. One of the essential components for the initiation of protein synthesis. Stabilizes the binding of IF-2 and IF-3 on the 30S subunit to which N-formylmethionyl-tRNA(fMet) subsequently binds. Helps modulate mRNA selection, yielding the 30S pre-initiation complex (PIC). Upon addition of the 50S ribosomal subunit IF-1, IF-2 and IF-3 are released leaving the mature 70S translation initiation complex. This chain is Translation initiation factor IF-1, found in Shewanella baltica (strain OS155 / ATCC BAA-1091).